The chain runs to 337 residues: 2-oxoglutarate-dependent ethylene/succinate-forming enzyme (337 aa).

The Fe2OG dioxygenase domain occupies 166 to 286; it reads GWHHMRVLRF…RFACAYFHEP (121 aa). Residues His-189 and His-268 each coordinate Fe cation.

It belongs to the iron/ascorbate-dependent oxidoreductase family. As to quaternary structure, monomer. It depends on Fe(2+) as a cofactor.

The catalysed reaction is 2-oxoglutarate + O2 + 2 H(+) = ethene + 3 CO2 + H2O. It catalyses the reaction L-arginine + 2-oxoglutarate + O2 = guanidine + L-glutamate 5-semialdehyde + succinate + CO2. The protein operates within alkene biosynthesis; ethylene biosynthesis via 2-oxoglutarate. Simultaneously catalyzes two reactions, namely formation of ethylene and of succinate from 2-oxoglutarate. This chain is 2-oxoglutarate-dependent ethylene/succinate-forming enzyme (efe), found in Pseudomonas syringae pv. pisi.